The sequence spans 776 residues: Protein FAM83C (776 aa).

Residues 1–340 (MQGCQAGASI…LYAESQPVEG (340 aa)) are DUF1669. 5 disordered regions span residues 344–467 (NEDP…STSP), 494–565 (SRLP…SLQH), 617–653 (HGQL…DDRR), 669–694 (PFRS…VGSA), and 716–745 (QGAR…LFAP). Residues 368 to 385 (SATGSSPSSNSLSSIKHS) show a composition bias toward low complexity. Residues 452-467 (PWSQSSPALNHSSTSP) are compositionally biased toward polar residues. Basic and acidic residues predominate over residues 523–539 (VEEKKVSLSQSHDHLDR). Polar residues predominate over residues 554–563 (SRVTPDSSSL).

This sequence belongs to the FAM83 family. In terms of assembly, directly interacts (via DUF1669) with CSNK1A1 and CSNK1A1L. May interact with RAF1. In terms of processing, phosphorylated by CSNK1A1.

It is found in the cytoplasm. In terms of biological role, may play a role in MAPK signaling. This is Protein FAM83C from Mus musculus (Mouse).